The chain runs to 319 residues: RWD domain-containing protein 2B (319 aa).

One can recognise an RWD domain in the interval 41–165 (AELDLLASMF…EWVREHASGY (125 aa)). Ser275 is modified (phosphoserine).

Ubiquitous.

The sequence is that of RWD domain-containing protein 2B (RWDD2B) from Homo sapiens (Human).